We begin with the raw amino-acid sequence, 234 residues long: Thymidylate kinase (234 aa).

10 to 17 (GGEGSGKT) serves as a coordination point for ATP.

This sequence belongs to the thymidylate kinase family.

It carries out the reaction dTMP + ATP = dTDP + ADP. Functionally, phosphorylation of dTMP to form dTDP in both de novo and salvage pathways of dTTP synthesis. This chain is Thymidylate kinase, found in Cyanothece sp. (strain PCC 7425 / ATCC 29141).